The primary structure comprises 365 residues: Putrescine 2-hydroxylase (365 aa).

The Rieske domain occupies 44-141 (GHELMVPEVG…LQNWNGLLFE (98 aa)). [2Fe-2S] cluster is bound by residues Cys81, His83, Cys100, and His103.

The protein belongs to the bacterial ring-hydroxylating dioxygenase alpha subunit family. It depends on [2Fe-2S] cluster as a cofactor.

Rieske-type iron sulfur protein that can catalyze in vitro the 2-hydroxylation of putrescine, forming 2-hydroxyputrescine. May be involved in the biosynthesis of the cyclic hydroxamate siderophore alcaligin. The polypeptide is Putrescine 2-hydroxylase (Ralstonia nicotianae (strain ATCC BAA-1114 / GMI1000) (Ralstonia solanacearum)).